A 291-amino-acid chain; its full sequence is Ribonuclease Z (291 aa).

Residues H61, H63, D65, H66, H133, D201, and H257 each coordinate Zn(2+). The Proton acceptor role is filled by D65.

The protein belongs to the RNase Z family. Homodimer. The cofactor is Zn(2+).

The catalysed reaction is Endonucleolytic cleavage of RNA, removing extra 3' nucleotides from tRNA precursor, generating 3' termini of tRNAs. A 3'-hydroxy group is left at the tRNA terminus and a 5'-phosphoryl group is left at the trailer molecule.. Functionally, zinc phosphodiesterase, which displays some tRNA 3'-processing endonuclease activity. Probably involved in tRNA maturation, by removing a 3'-trailer from precursor tRNA. The polypeptide is Ribonuclease Z (Saccharolobus islandicus (strain M.16.27) (Sulfolobus islandicus)).